A 1078-amino-acid polypeptide reads, in one-letter code: Lon protease homolog, mitochondrial (1078 aa).

A mitochondrion-targeting transit peptide spans 1–27; the sequence is MIKASKCNKPRALFLVRVSIPRTFIRN. Positions 71–123 are enriched in basic and acidic residues; the sequence is SEKEKQPSTDKSNDKDKPSRKEKGKDKEKENEEKKDINMDEKYEINEETDTKP. The tract at residues 71-179 is disordered; it reads SEKEKQPSTD…KEFLSPSDSG (109 aa). Residues 127–157 show a composition bias toward low complexity; the sequence is PNNPVSSKSNISSSSGGDNNNNNNNNNNNND. A compositionally biased stretch (basic and acidic residues) spans 158–172; it reads SDGKNDDGSPKDKEF. Residues 182 to 400 form the Lon N-terminal domain; it reads PPFLAIAMKD…LSLQLLQVEA (219 aa). Residue 548–555 coordinates ATP; it reads GPPGTGKT. A disordered region spans residues 792–825; sequence NSPIEYIQSNTEVKAETTTESQQEQEKEKEKDEE. Residues 815–825 are compositionally biased toward basic and acidic residues; the sequence is EQEKEKEKDEE. Residues 861-1049 enclose the Lon proteolytic domain; it reads TLNPGVATGL…SEVFEHLFQG (189 aa). Active-site residues include S955 and K998.

This sequence belongs to the peptidase S16 family. Homohexamer or homoheptamer. Organized in a ring with a central cavity.

The protein localises to the mitochondrion matrix. The enzyme catalyses Hydrolysis of proteins in presence of ATP.. ATP-dependent serine protease that mediates the selective degradation of misfolded, unassembled or oxidatively damaged polypeptides as well as certain short-lived regulatory proteins in the mitochondrial matrix. May also have a chaperone function in the assembly of inner membrane protein complexes. Participates in the regulation of mitochondrial gene expression and in the maintenance of the integrity of the mitochondrial genome. Binds to mitochondrial DNA in a site-specific manner. The chain is Lon protease homolog, mitochondrial from Candida albicans (strain SC5314 / ATCC MYA-2876) (Yeast).